Here is a 215-residue protein sequence, read N- to C-terminus: Putative serine/threonine-protein kinase YrzF (215 aa).

Residues 27–215 (SEELTLIGKG…HFAQRKRKYS (189 aa)) form the Protein kinase domain. ATP contacts are provided by residues 33–41 (IGKGRSAYV) and K54. Catalysis depends on D135, which acts as the Proton acceptor.

It belongs to the protein kinase superfamily. Ser/Thr protein kinase family.

It carries out the reaction L-seryl-[protein] + ATP = O-phospho-L-seryl-[protein] + ADP + H(+). The enzyme catalyses L-threonyl-[protein] + ATP = O-phospho-L-threonyl-[protein] + ADP + H(+). The chain is Putative serine/threonine-protein kinase YrzF (yrzF) from Bacillus subtilis (strain 168).